The primary structure comprises 277 residues: Diaminopimelate epimerase (277 aa).

2 residues coordinate substrate: Asn-11 and Asn-62. The active-site Proton donor is Cys-71. Substrate contacts are provided by residues Gly-72 to Asn-73, Asn-160, Asn-193, and Glu-211 to Arg-212. Residue Cys-220 is the Proton acceptor of the active site. Gly-221–Thr-222 contacts substrate.

The protein belongs to the diaminopimelate epimerase family. Homodimer.

Its subcellular location is the cytoplasm. The enzyme catalyses (2S,6S)-2,6-diaminopimelate = meso-2,6-diaminopimelate. Its pathway is amino-acid biosynthesis; L-lysine biosynthesis via DAP pathway; DL-2,6-diaminopimelate from LL-2,6-diaminopimelate: step 1/1. Functionally, catalyzes the stereoinversion of LL-2,6-diaminopimelate (L,L-DAP) to meso-diaminopimelate (meso-DAP), a precursor of L-lysine. The chain is Diaminopimelate epimerase from Methanococcus maripaludis (strain DSM 14266 / JCM 13030 / NBRC 101832 / S2 / LL).